Here is a 277-residue protein sequence, read N- to C-terminus: Phosphoenolpyruvate synthase regulatory protein (277 aa).

157 to 164 provides a ligand contact to ADP; it reads GVSRCGKT.

The protein belongs to the pyruvate, phosphate/water dikinase regulatory protein family. PSRP subfamily.

It catalyses the reaction [pyruvate, water dikinase] + ADP = [pyruvate, water dikinase]-phosphate + AMP + H(+). The enzyme catalyses [pyruvate, water dikinase]-phosphate + phosphate + H(+) = [pyruvate, water dikinase] + diphosphate. Functionally, bifunctional serine/threonine kinase and phosphorylase involved in the regulation of the phosphoenolpyruvate synthase (PEPS) by catalyzing its phosphorylation/dephosphorylation. The sequence is that of Phosphoenolpyruvate synthase regulatory protein from Salmonella agona (strain SL483).